Consider the following 121-residue polypeptide: Large ribosomal subunit protein uL18 (121 aa).

Belongs to the universal ribosomal protein uL18 family. As to quaternary structure, part of the 50S ribosomal subunit; part of the 5S rRNA/L5/L18/L25 subcomplex. Contacts the 5S and 23S rRNAs.

Its function is as follows. This is one of the proteins that bind and probably mediate the attachment of the 5S RNA into the large ribosomal subunit, where it forms part of the central protuberance. In Streptococcus equi subsp. zooepidemicus (strain MGCS10565), this protein is Large ribosomal subunit protein uL18.